We begin with the raw amino-acid sequence, 211 residues long: MNVDDLTFDDKGLIPAVVQDAQSKEVVTVAYMNRESFEKTVETGETWFYSRSRQELWHKGATSGHTQKVVDIRYDCDGDALVVLVELKGPACHTGKYSCFFESVFGKKIYGASDRFGIIATLEALIAEREAEMPEGAYTTYLFEKGVDKILKKVGEEATEVVIAAKNRDAEELKWEVADLLYHLLVLLREQKLPVDEVLAVLEERHRPKEE.

The interval 1–118 (MNVDDLTFDD…IYGASDRFGI (118 aa)) is phosphoribosyl-AMP cyclohydrolase. Positions 119 to 211 (IATLEALIAE…LEERHRPKEE (93 aa)) are phosphoribosyl-ATP pyrophosphohydrolase.

The protein in the N-terminal section; belongs to the PRA-CH family. In the C-terminal section; belongs to the PRA-PH family.

The protein localises to the cytoplasm. The enzyme catalyses 1-(5-phospho-beta-D-ribosyl)-ATP + H2O = 1-(5-phospho-beta-D-ribosyl)-5'-AMP + diphosphate + H(+). The catalysed reaction is 1-(5-phospho-beta-D-ribosyl)-5'-AMP + H2O = 1-(5-phospho-beta-D-ribosyl)-5-[(5-phospho-beta-D-ribosylamino)methylideneamino]imidazole-4-carboxamide. It participates in amino-acid biosynthesis; L-histidine biosynthesis; L-histidine from 5-phospho-alpha-D-ribose 1-diphosphate: step 2/9. Its pathway is amino-acid biosynthesis; L-histidine biosynthesis; L-histidine from 5-phospho-alpha-D-ribose 1-diphosphate: step 3/9. The chain is Histidine biosynthesis bifunctional protein HisIE (hisI) from Halalkalibacterium halodurans (strain ATCC BAA-125 / DSM 18197 / FERM 7344 / JCM 9153 / C-125) (Bacillus halodurans).